A 1283-amino-acid polypeptide reads, in one-letter code: Bifunctional dioxygenase (DOX)-epoxy alcohol synthase (EAS) (1283 aa).

The segment at 1 to 64 is disordered; it reads MAEHKNGVAT…LPKEMGDGSY (64 aa). Residues 130–476 form a fatty acid alpha-dioxygenase region; it reads TNSFISQLWN…DGKFNDDELV (347 aa). Position 227 (H227) interacts with heme b. Y405 is a catalytic residue. H408 lines the heme b pocket. An epoxy alcohol synthase region spans residues 684-1108; it reads INIIGYNAAK…WDDGCGTDLF (425 aa). Residue C1035 coordinates heme.

In the N-terminal section; belongs to the peroxidase family. The protein in the C-terminal section; belongs to the cytochrome P450 family. In terms of assembly, homotetramer. Heme b is required as a cofactor. The cofactor is heme.

It carries out the reaction (9Z,12Z)-octadecadienoate + O2 = (8E,10R,12Z)-10-hydroperoxyoctadeca-8,12-dienoate. It catalyses the reaction (8E,10R,12Z)-10-hydroperoxyoctadeca-8,12-dienoate = (12S,13R)-epoxy-(10R)-hydroxy-(8E)-octadecenoate. The enzyme catalyses (9Z)-octadecenoate + O2 = (8R)-hydroperoxy-(9Z)-octadecenoate. In terms of biological role, bifunctional dioxygenase (DOX)-epoxy alcohol synthase (EAS) that converts linoleic acid (18:2n-6) sequentially to 10(R)-hydroperoxy-8(E),12(Z)-octadecadienoic acid (10R-HPODE) and 10R-HPODE further to 12(13)-epoxy-10-hydroxy-8(E)-octa-decenoic acid as the end product. Linoleic acid is oxidized mainly to the R stereoisomer of 10-HPODE. The dioxygenase domain is also able to oygenate position C-8 of linoleic acid to produce 8(R)-hydroperoxy-8(E),12(Z)-octadecadienoic acid (8R-HPODE). The protein is Bifunctional dioxygenase (DOX)-epoxy alcohol synthase (EAS) of Fusarium oxysporum (strain Fo5176) (Fusarium vascular wilt).